The sequence spans 260 residues: Cytosolic Fe-S cluster assembly factor Nubp2 homolog 2 (260 aa).

14-21 (GKGGVGKS) serves as a coordination point for ATP. Positions 188 and 191 each coordinate [4Fe-4S] cluster.

This sequence belongs to the Mrp/NBP35 ATP-binding proteins family. NUBP2/CFD1 subfamily. Heterotetramer of 2 Nubp1 and 2 Nubp2 chains. [4Fe-4S] cluster is required as a cofactor.

It localises to the cytoplasm. Component of the cytosolic iron-sulfur (Fe/S) protein assembly (CIA) machinery. Required for maturation of extramitochondrial Fe-S proteins. The Nubp1-Nubp2 heterotetramer forms a Fe-S scaffold complex, mediating the de novo assembly of an Fe-S cluster and its transfer to target apoproteins. The sequence is that of Cytosolic Fe-S cluster assembly factor Nubp2 homolog 2 from Drosophila yakuba (Fruit fly).